A 383-amino-acid chain; its full sequence is Probable mannan endo-1,4-beta-mannosidase A (383 aa).

An N-terminal signal peptide occupies residues 1–21; it reads MKLSNALLTLASLALANVSTA. A glycan (N-linked (GlcNAc...) asparagine) is linked at Asn17. Residue Trp92 participates in substrate binding. N-linked (GlcNAc...) asparagine glycosylation is present at Asn194. Asn205 contributes to the substrate binding site. Glu206 acts as the Proton donor in catalysis. An N-linked (GlcNAc...) asparagine glycan is attached at Asn263. Substrate is bound at residue Tyr281. Glu314 serves as the catalytic Nucleophile. Trp344 serves as a coordination point for substrate.

It belongs to the glycosyl hydrolase 5 (cellulase A) family.

The protein resides in the secreted. It catalyses the reaction Random hydrolysis of (1-&gt;4)-beta-D-mannosidic linkages in mannans, galactomannans and glucomannans.. Functionally, endo-1,4-mannanase, a crucial enzyme for depolymerization of seed galactomannans and wood galactoglucomannans. The protein is Probable mannan endo-1,4-beta-mannosidase A (manA) of Aspergillus niger (strain ATCC MYA-4892 / CBS 513.88 / FGSC A1513).